The following is a 433-amino-acid chain: Aspartate--tRNA(Asp/Asn) ligase (433 aa).

Position 167 (Glu-167) interacts with L-aspartate. Residues 189 to 192 form an aspartate region; the sequence is QLFK. Arg-211 provides a ligand contact to L-aspartate. ATP is bound by residues 211–213, 219–221, and Glu-356; these read RAE and RHL. Mg(2+) contacts are provided by Glu-356 and Ser-359. Residues Ser-359 and Arg-363 each contribute to the L-aspartate site. 404 to 407 provides a ligand contact to ATP; that stretch reads GGER.

This sequence belongs to the class-II aminoacyl-tRNA synthetase family. Type 2 subfamily. As to quaternary structure, homodimer. Mg(2+) serves as cofactor.

Its subcellular location is the cytoplasm. It catalyses the reaction tRNA(Asx) + L-aspartate + ATP = L-aspartyl-tRNA(Asx) + AMP + diphosphate. Aspartyl-tRNA synthetase with relaxed tRNA specificity since it is able to aspartylate not only its cognate tRNA(Asp) but also tRNA(Asn). Reaction proceeds in two steps: L-aspartate is first activated by ATP to form Asp-AMP and then transferred to the acceptor end of tRNA(Asp/Asn). This is Aspartate--tRNA(Asp/Asn) ligase from Natronomonas pharaonis (strain ATCC 35678 / DSM 2160 / CIP 103997 / JCM 8858 / NBRC 14720 / NCIMB 2260 / Gabara) (Halobacterium pharaonis).